Consider the following 191-residue polypeptide: Probable GTP-binding protein EngB (191 aa).

The EngB-type G domain occupies 22–190 (RLPEIAFLGR…WQAITTTLQA (169 aa)). GTP-binding positions include 30–37 (GRSNVGKS), 57–61 (GRTQT), 75–78 (DLPG), 142–145 (TKTD), and 169–171 (FSA). Mg(2+) contacts are provided by serine 37 and threonine 59.

Belongs to the TRAFAC class TrmE-Era-EngA-EngB-Septin-like GTPase superfamily. EngB GTPase family. The cofactor is Mg(2+).

Necessary for normal cell division and for the maintenance of normal septation. This chain is Probable GTP-binding protein EngB, found in Solibacter usitatus (strain Ellin6076).